A 278-amino-acid polypeptide reads, in one-letter code: Heat stress transcription factor C-2b (278 aa).

Positions 105 to 114 are enriched in gly residues; sequence AAGGGGGGGG. The interval 105-132 is disordered; the sequence is AAGGGGGGGGGKRRDASADGGGGGGDED. The tract at residues 143–179 is hydrophobic repeat HR-A/B; it reads LKQEQRTIDDRVAAMWRRVQETERRPKQMLAFLLKVV. Positions 219–222 match the Nuclear localization signal motif; the sequence is KRAR.

This sequence belongs to the HSF family. Class C subfamily. In terms of assembly, homotrimer. Post-translationally, exhibits temperature-dependent phosphorylation.

It localises to the nucleus. In terms of biological role, transcriptional regulator that specifically binds DNA of heat shock promoter elements (HSE). In Oryza sativa subsp. japonica (Rice), this protein is Heat stress transcription factor C-2b (HSFC2B).